Consider the following 160-residue polypeptide: Cytochrome c-type biogenesis protein CcmE (160 aa).

Over 1-8 (MNPRRKKR) the chain is Cytoplasmic. A helical; Signal-anchor for type II membrane protein transmembrane segment spans residues 9 to 29 (LGVVLAILFGLSATIGLIIYA). Residues 30–160 (LNQNMDLFYT…SQEQKQGSDQ (131 aa)) lie on the Periplasmic side of the membrane. Positions 128 and 132 each coordinate heme.

Belongs to the CcmE/CycJ family.

The protein resides in the cell inner membrane. Heme chaperone required for the biogenesis of c-type cytochromes. Transiently binds heme delivered by CcmC and transfers the heme to apo-cytochromes in a process facilitated by CcmF and CcmH. The sequence is that of Cytochrome c-type biogenesis protein CcmE from Vibrio cholerae serotype O1 (strain ATCC 39541 / Classical Ogawa 395 / O395).